The chain runs to 394 residues: Phosphoglycerate kinase (394 aa).

Residues 21-23 (DFN), Arg36, 59-62 (HLGR), Arg118, and Arg151 each bind substrate. Ser183 is subject to Phosphoserine. Residue Lys201 participates in ATP binding. Phosphothreonine is present on Thr299. Residues Glu323 and 350 to 353 (GGDS) each bind ATP.

It belongs to the phosphoglycerate kinase family. Monomer.

The protein resides in the cytoplasm. It catalyses the reaction (2R)-3-phosphoglycerate + ATP = (2R)-3-phospho-glyceroyl phosphate + ADP. It participates in carbohydrate degradation; glycolysis; pyruvate from D-glyceraldehyde 3-phosphate: step 2/5. The sequence is that of Phosphoglycerate kinase from Halalkalibacterium halodurans (strain ATCC BAA-125 / DSM 18197 / FERM 7344 / JCM 9153 / C-125) (Bacillus halodurans).